A 67-amino-acid chain; its full sequence is Probable Sec-independent protein translocase protein TatE (67 aa).

Residues 4 to 21 (ISITKLLVVAALVVLLFG) traverse the membrane as a helical segment.

It belongs to the TatA/E family. TatE subfamily.

Its subcellular location is the cell inner membrane. Functionally, part of the twin-arginine translocation (Tat) system that transports large folded proteins containing a characteristic twin-arginine motif in their signal peptide across membranes. TatE shares overlapping functions with TatA. The chain is Probable Sec-independent protein translocase protein TatE from Salmonella arizonae (strain ATCC BAA-731 / CDC346-86 / RSK2980).